Reading from the N-terminus, the 280-residue chain is Mesaconyl-C(4)-CoA hydratase (280 aa).

Belongs to the HTD2 family. In terms of assembly, homodimer.

The catalysed reaction is (3S)-citramalyl-CoA = 3-methylfumaryl-CoA + H2O. Its activity is regulated as follows. Inhibited by 3-methylfumaryl-CoA concentrations above 0.3 mM. Involved in the glyoxylate assimilation cycle used to regenerate acetyl-CoA and produce pyruvate as universal precursor for biosynthesis. Catalyzes the hydration of 3-methylfumaryl-CoA (mesaconyl-C4-CoA) to (3S)-citramalyl-CoA. The sequence is that of Mesaconyl-C(4)-CoA hydratase (meh) from Chloroflexus aurantiacus (strain ATCC 29366 / DSM 635 / J-10-fl).